A 162-amino-acid chain; its full sequence is Glutathione peroxidase-like peroxiredoxin 2 (162 aa).

C37 (cysteine sulfenic acid (-SOH) intermediate) is an active-site residue. A disulfide bond links C37 and C83.

It belongs to the glutathione peroxidase family. Monomer.

The protein resides in the cytoplasm. It is found in the nucleus. The protein localises to the mitochondrion outer membrane. Its subcellular location is the mitochondrion inner membrane. The enzyme catalyses a hydroperoxide + [thioredoxin]-dithiol = an alcohol + [thioredoxin]-disulfide + H2O. In terms of biological role, glutathione peroxidase-like protein that protects cells from phospholipid hydroperoxides and nonphospholipid peroxides during oxidative stress. Plays an important role in the oxidative stress-induced response in the presence of Ca(2+). Has peroxidase activity using preferentially thioredoxin as a reducing power. The redox state of the mitochondrial GPX2 is regulated by TRX1 and TRX2 (cytoplasmic thioredoxin), and by TRX3 (mitochondrial matrix thioredoxin). Involved in sporulation. The protein is Glutathione peroxidase-like peroxiredoxin 2 of Saccharomyces cerevisiae (strain ATCC 204508 / S288c) (Baker's yeast).